The sequence spans 132 residues: MSMSDPLGDMLTRIRNALARKKGKVVTPASKLRARVLDVLQSEGYIRGYNQVDLGDGKSEIEIELKYFEGLAAIREISRVSKPGRRVYVSAKSIPHVANGLGISILSTPKGVMADYEARKQNVGGELLCRVF.

This sequence belongs to the universal ribosomal protein uS8 family. In terms of assembly, part of the 30S ribosomal subunit. Contacts proteins S5 and S12.

One of the primary rRNA binding proteins, it binds directly to 16S rRNA central domain where it helps coordinate assembly of the platform of the 30S subunit. The chain is Small ribosomal subunit protein uS8 from Bartonella henselae (strain ATCC 49882 / DSM 28221 / CCUG 30454 / Houston 1) (Rochalimaea henselae).